We begin with the raw amino-acid sequence, 155 residues long: Ciliary microtubule inner protein 2C (155 aa).

This sequence belongs to the CIMIP2 family.

The protein localises to the cytoplasm. The protein resides in the cytoskeleton. It is found in the cilium axoneme. Functionally, microtubule inner protein (MIP) part of the dynein-decorated doublet microtubules (DMTs) in cilia axoneme, which is required for motile cilia beating. The sequence is that of Ciliary microtubule inner protein 2C (cimip2ca) from Xenopus laevis (African clawed frog).